A 220-amino-acid polypeptide reads, in one-letter code: Translation initiation factor 6 (220 aa).

This sequence belongs to the eIF-6 family.

Its function is as follows. Binds to the 50S ribosomal subunit and prevents its association with the 30S ribosomal subunit to form the 70S initiation complex. The protein is Translation initiation factor 6 of Halobacterium salinarum (strain ATCC 29341 / DSM 671 / R1).